An 812-amino-acid polypeptide reads, in one-letter code: Axin-2 (812 aa).

Residues M1–K43 form a disordered region. The region spanning S84–V203 is the RGS domain. Disordered stretches follow at residues S275–P326, E388–E430, T446–N484, and R609–H726. Polar residues predominate over residues N285 to E303. Positions S305–A323 are enriched in low complexity. An interaction with GSK3B region spans residues L329–S415. A compositionally biased stretch (basic and acidic residues) spans E388–L397. A compositionally biased stretch (acidic residues) spans Q401–E410. A compositionally biased stretch (low complexity) spans M411 to P421. The segment at S415 to R467 is interaction with beta-catenin. Polar residues predominate over residues S475 to N484. Basic and acidic residues predominate over residues E672–K683. In terms of domain architecture, DIX spans G730–D812.

As to quaternary structure, interacts with hwa; leading to promote the tankyrase-mediated degradation of axin1. In terms of processing, ADP-ribosylated by tankyrase tnks and tnks2. Poly-ADP-ribosylated protein is recognized by rnf146, followed by ubiquitination and subsequent activation of the Wnt signaling pathway. Ubiquitinated by rnf146 when poly-ADP-ribosylated, leading to its degradation and subsequent activation of the Wnt signaling pathway.

The protein localises to the cytoplasm. Component of the beta-catenin destruction complex required for regulating ctnnb1 levels through phosphorylation and ubiquitination, and modulating Wnt-signaling. Controls dorsoventral patterning by down-regulating ctnnb1 to inhibit the Wnt signaling pathway and ventralize embryos. This Danio rerio (Zebrafish) protein is Axin-2 (axin2).